A 280-amino-acid chain; its full sequence is Pantothenate synthetase (280 aa).

30–37 provides a ligand contact to ATP; sequence MGYLHEGH. His37 serves as the catalytic Proton donor. Gln61 serves as a coordination point for (R)-pantoate. Residue Gln61 participates in beta-alanine binding. 147 to 150 is an ATP binding site; it reads GQKD. Residue Gln153 coordinates (R)-pantoate. ATP-binding positions include Val176 and 184-187; that span reads MSSR.

It belongs to the pantothenate synthetase family. As to quaternary structure, homodimer.

It is found in the cytoplasm. The enzyme catalyses (R)-pantoate + beta-alanine + ATP = (R)-pantothenate + AMP + diphosphate + H(+). It functions in the pathway cofactor biosynthesis; (R)-pantothenate biosynthesis; (R)-pantothenate from (R)-pantoate and beta-alanine: step 1/1. Its function is as follows. Catalyzes the condensation of pantoate with beta-alanine in an ATP-dependent reaction via a pantoyl-adenylate intermediate. In Fervidobacterium nodosum (strain ATCC 35602 / DSM 5306 / Rt17-B1), this protein is Pantothenate synthetase.